Reading from the N-terminus, the 256-residue chain is Type III pantothenate kinase (256 aa).

ATP is bound at residue Asp6–Val13. Substrate-binding positions include Tyr100 and Gly107 to Arg110. The active-site Proton acceptor is the Asp109. Asp129 contacts K(+). Thr132 serves as a coordination point for ATP. Residue Thr184 participates in substrate binding.

It belongs to the type III pantothenate kinase family. In terms of assembly, homodimer. It depends on NH4(+) as a cofactor. K(+) serves as cofactor.

It localises to the cytoplasm. The catalysed reaction is (R)-pantothenate + ATP = (R)-4'-phosphopantothenate + ADP + H(+). The protein operates within cofactor biosynthesis; coenzyme A biosynthesis; CoA from (R)-pantothenate: step 1/5. Functionally, catalyzes the phosphorylation of pantothenate (Pan), the first step in CoA biosynthesis. This is Type III pantothenate kinase from Geotalea uraniireducens (strain Rf4) (Geobacter uraniireducens).